The sequence spans 224 residues: Coiled-coil domain-containing protein 43 (224 aa).

Residue Lys-95 forms a Glycyl lysine isopeptide (Lys-Gly) (interchain with G-Cter in SUMO1) linkage. Coiled-coil stretches lie at residues 121–145 and 177–218; these read SEEEKQRKAALLAQYADVTDEEDEA and RKLE…KRTQ. The span at 138 to 149 shows a compositional bias: acidic residues; it reads VTDEEDEADEKD. Disordered stretches follow at residues 138 to 157 and 176 to 224; these read VTDEEDEADEKDDSGATTMN and ARKL…ERKR. The residue at position 139 (Thr-139) is a Phosphothreonine. Over residues 176-211 the composition is skewed to basic and acidic residues; it reads ARKLERDSLRDESQRKKEQDKLQRERDKLAKQERKE. The segment covering 212–224 has biased composition (basic residues); the sequence is KEKKRTQRGERKR.

Belongs to the CCDC43 family.

This Homo sapiens (Human) protein is Coiled-coil domain-containing protein 43 (CCDC43).